Reading from the N-terminus, the 461-residue chain is UPF0210 protein Ddes_0622 (461 aa).

This sequence belongs to the UPF0210 family. In terms of assembly, homodimer.

The polypeptide is UPF0210 protein Ddes_0622 (Desulfovibrio desulfuricans (strain ATCC 27774 / DSM 6949 / MB)).